Reading from the N-terminus, the 179-residue chain is MAFLASGAYLTHRQKVLRLYKRALRHLESWCVQRDKYRYFACLMRARFEEHKNEKDMVRATQLLKEAEEEFWYRQHPQPYIFPDSPGGTSYERYDCYKVPEWCLDDWHPSEKAMYPDYFAKREQWKKLQRESWEREVKQLQEETPPGGPLTEALPPARKEGDLPPLWWYIVTRPRERPM.

The residue at position 2 (A2) is an N-acetylalanine. S85 is subject to Phosphoserine. The segment at 136-162 is disordered; the sequence is EVKQLQEETPPGGPLTEALPPARKEGD.

It belongs to the complex I LYR family. In terms of assembly, mammalian complex I is composed of 45 different subunits.

It localises to the mitochondrion inner membrane. Functionally, accessory subunit of the mitochondrial membrane respiratory chain NADH dehydrogenase (Complex I), that is believed to be not involved in catalysis. Complex I functions in the transfer of electrons from NADH to the respiratory chain. The immediate electron acceptor for the enzyme is believed to be ubiquinone. This chain is NADH dehydrogenase [ubiquinone] 1 beta subcomplex subunit 9 (NDUFB9), found in Pongo abelii (Sumatran orangutan).